The sequence spans 397 residues: MKVAYFDCAAGIAGDMCLGALLDCGLPLEYLNQQLQALGLEGEYSLQVCRVQRCGQPALQAVVEVLDESPPARPWREIQALIAGSRLAPAVKARSLKVFEKLAQAEAKVHQVPLETVHFHEVGAVDALVDIVGTCVGLDWLQVERVISSPHPIGGGWVDTEHGKLAVPVPAVIELWEMGRVPVFSNGVEAELVTPTGAALAVALAEAFGPCPPLRLEKVGRGAGSRELPIPNIFRLWIGQSQGEEPTEIVSVLQTQIDDLNPQVIAYTCEQLLALGAWDVFTQPITMKQGRPGVLLTVICPPERVPECQDFIFRETTTLGIRHSQQQRTVLERRIERVETPYGLVDIKVACRHGHIVNAQPEFRDCVARAQEFRVPVQTVWLAAQAAWQKRLQGDPA.

It belongs to the LarC family.

This chain is Putative nickel insertion protein, found in Synechococcus sp. (strain JA-3-3Ab) (Cyanobacteria bacterium Yellowstone A-Prime).